A 523-amino-acid polypeptide reads, in one-letter code: Pentatricopeptide repeat-containing protein At1g52640, mitochondrial (523 aa).

The transit peptide at 1–5 (MAIRT) directs the protein to the mitochondrion. 10 PPR repeats span residues 101–135 (SLES…NYFE), 137–171 (SSKV…GIKP), 172–206 (CVDD…GIVP), 207–241 (SAKT…NCVV), 242–276 (DLLA…GLKP), 277–311 (DAYS…DLVP), 312–346 (NVYT…GANP), 347–381 (DTWT…KCLP), 382–416 (DRHT…KFYP), and 417–452 (TVAT…GIPP). The tract at residues 498-523 (KRRRLGRRSENSEDDDDDFELERDTI) is disordered. A compositionally biased stretch (acidic residues) spans 509 to 523 (SEDDDDDFELERDTI).

Belongs to the PPR family. P subfamily.

The protein resides in the mitochondrion. The protein is Pentatricopeptide repeat-containing protein At1g52640, mitochondrial of Arabidopsis thaliana (Mouse-ear cress).